Here is a 481-residue protein sequence, read N- to C-terminus: UDP-N-acetylmuramate--L-alanine ligase (481 aa).

115–121 (GTHGKTT) serves as a coordination point for ATP.

Belongs to the MurCDEF family.

The protein resides in the cytoplasm. It catalyses the reaction UDP-N-acetyl-alpha-D-muramate + L-alanine + ATP = UDP-N-acetyl-alpha-D-muramoyl-L-alanine + ADP + phosphate + H(+). The protein operates within cell wall biogenesis; peptidoglycan biosynthesis. Functionally, cell wall formation. This is UDP-N-acetylmuramate--L-alanine ligase from Rhodospirillum rubrum (strain ATCC 11170 / ATH 1.1.1 / DSM 467 / LMG 4362 / NCIMB 8255 / S1).